Reading from the N-terminus, the 307-residue chain is Probable transposase for transposon Tn903 (307 aa).

Its function is as follows. Required for transposition of transposon Tn903. The protein is Probable transposase for transposon Tn903 of Escherichia coli.